Here is a 422-residue protein sequence, read N- to C-terminus: L-threonine dehydratase biosynthetic IlvA (422 aa).

Lys-56 carries the post-translational modification N6-(pyridoxal phosphate)lysine. Residues Asn-83, 189–193, and Ser-315 each bind pyridoxal 5'-phosphate; that span reads GGGGL. The region spanning 339 to 413 is the ACT-like domain; it reads HYFILNFPQR…FDPSNIYINE (75 aa).

This sequence belongs to the serine/threonine dehydratase family. In terms of assembly, homotetramer. Pyridoxal 5'-phosphate is required as a cofactor.

It carries out the reaction L-threonine = 2-oxobutanoate + NH4(+). Its pathway is amino-acid biosynthesis; L-isoleucine biosynthesis; 2-oxobutanoate from L-threonine: step 1/1. Functionally, catalyzes the anaerobic formation of alpha-ketobutyrate and ammonia from threonine in a two-step reaction. The first step involved a dehydration of threonine and a production of enamine intermediates (aminocrotonate), which tautomerizes to its imine form (iminobutyrate). Both intermediates are unstable and short-lived. The second step is the nonenzymatic hydrolysis of the enamine/imine intermediates to form 2-ketobutyrate and free ammonia. In the low water environment of the cell, the second step is accelerated by RidA. The protein is L-threonine dehydratase biosynthetic IlvA (ilvA) of Staphylococcus aureus (strain bovine RF122 / ET3-1).